Reading from the N-terminus, the 433-residue chain is Enolase (433 aa).

Q164 lines the (2R)-2-phosphoglycerate pocket. E206 functions as the Proton donor in the catalytic mechanism. Residues D243, E289, and D316 each contribute to the Mg(2+) site. K341, R370, S371, and K392 together coordinate (2R)-2-phosphoglycerate. K341 functions as the Proton acceptor in the catalytic mechanism.

It belongs to the enolase family. Mg(2+) serves as cofactor.

It localises to the cytoplasm. The protein resides in the secreted. Its subcellular location is the cell surface. The catalysed reaction is (2R)-2-phosphoglycerate = phosphoenolpyruvate + H2O. It functions in the pathway carbohydrate degradation; glycolysis; pyruvate from D-glyceraldehyde 3-phosphate: step 4/5. In terms of biological role, catalyzes the reversible conversion of 2-phosphoglycerate (2-PG) into phosphoenolpyruvate (PEP). It is essential for the degradation of carbohydrates via glycolysis. This is Enolase from Borreliella burgdorferi (strain ZS7) (Borrelia burgdorferi).